A 442-amino-acid polypeptide reads, in one-letter code: UDP-N-acetylmuramoylalanine--D-glutamate ligase (442 aa).

ATP is bound at residue 115-121 (GSNGKST).

This sequence belongs to the MurCDEF family.

The protein localises to the cytoplasm. It catalyses the reaction UDP-N-acetyl-alpha-D-muramoyl-L-alanine + D-glutamate + ATP = UDP-N-acetyl-alpha-D-muramoyl-L-alanyl-D-glutamate + ADP + phosphate + H(+). It participates in cell wall biogenesis; peptidoglycan biosynthesis. In terms of biological role, cell wall formation. Catalyzes the addition of glutamate to the nucleotide precursor UDP-N-acetylmuramoyl-L-alanine (UMA). The chain is UDP-N-acetylmuramoylalanine--D-glutamate ligase from Aliivibrio salmonicida (strain LFI1238) (Vibrio salmonicida (strain LFI1238)).